Reading from the N-terminus, the 361-residue chain is Putative pumilio homolog 22 (361 aa).

The PUM-HD domain occupies 5 to 348 (RGYDLASQVL…NIVAIIDSET (344 aa)). 2 Pumilio repeats span residues 27 to 63 (HITYRHLLVLSSDDNGCVILKKVITIADDFLKDEFLD) and 64 to 103 (LIAQHAHSLSMHDLGISLIQHVLELDFTKKTTQDDKRLHE). The stretch at 104–131 (LMAEFDEVLSTSVTADVDKLHKLASKLM) is one Pumilio 3; degenerate repeat. A Pumilio 4 repeat occupies 132 to 167 (LDSDLFFEFVITRRGSLMIQIILGKSEEVDQVILAG). The Pumilio 5; degenerate repeat unit spans residues 168–205 (VKQRFIDVTTNFYGYRIMIQTIKVFKKRGDLKVYDQIL). Residues 206 to 243 (RLIGVHALYLTKDPDMGNKTFQHAINLHHQDCTTFIAC) form a Pumilio 6; degenerate repeat. Pumilio repeat units follow at residues 244 to 284 (GLQS…EIVK) and 285 to 319 (CDEDTLVRLATDEYGNNILKKFLALAKEHKEDFFG).

It is found in the cytoplasm. Functionally, sequence-specific RNA-binding protein that regulates translation and mRNA stability by binding the 3'-UTR of target mRNAs. This is Putative pumilio homolog 22 (APUM22) from Arabidopsis thaliana (Mouse-ear cress).